A 516-amino-acid polypeptide reads, in one-letter code: Bifunctional pantoate ligase/cytidylate kinase (516 aa).

The segment at 1-279 is pantoate--beta-alanine ligase; it reads MVRKIFQTNA…CGSTRLIDHT (279 aa). Position 29–36 (29–36) interacts with ATP; it reads MGGLHPGH. Catalysis depends on H36, which acts as the Proton donor. Q64 is a binding site for (R)-pantoate. A beta-alanine-binding site is contributed by Q64. Residue 153–156 coordinates ATP; that stretch reads GEKD. A (R)-pantoate-binding site is contributed by Q159. ATP is bound at residue 190–193; that stretch reads YSSR. Residues 280-516 form a cytidylate kinase region; it reads FLMHRKPIIA…PEEVWPTPNS (237 aa).

It in the N-terminal section; belongs to the pantothenate synthetase family. The protein in the C-terminal section; belongs to the cytidylate kinase family. Type 1 subfamily.

Its subcellular location is the cytoplasm. It catalyses the reaction (R)-pantoate + beta-alanine + ATP = (R)-pantothenate + AMP + diphosphate + H(+). The catalysed reaction is CMP + ATP = CDP + ADP. The enzyme catalyses dCMP + ATP = dCDP + ADP. It functions in the pathway cofactor biosynthesis; (R)-pantothenate biosynthesis; (R)-pantothenate from (R)-pantoate and beta-alanine: step 1/1. Catalyzes the condensation of pantoate with beta-alanine in an ATP-dependent reaction via a pantoyl-adenylate intermediate. Functionally, catalyzes the transfer of a phosphate group from ATP to either CMP or dCMP to form CDP or dCDP and ADP, respectively. In Prochlorococcus marinus (strain NATL1A), this protein is Bifunctional pantoate ligase/cytidylate kinase.